A 182-amino-acid chain; its full sequence is DOMON domain-containing protein Y73F4A.1 (182 aa).

Residues 1–18 (MFVLAIVFAFVFIPSSSS) form the signal peptide. The 118-residue stretch at 26-143 (ELVSMNWNVK…CLNWMVVPGG (118 aa)) folds into the DOMON domain. 2 N-linked (GlcNAc...) asparagine glycosylation sites follow: N47 and N128.

The protein localises to the secreted. This chain is DOMON domain-containing protein Y73F4A.1, found in Caenorhabditis elegans.